Consider the following 229-residue polypeptide: 7-cyano-7-deazaguanine synthase (229 aa).

15–25 (LSGGLDSATVV) lines the ATP pocket. Residues cysteine 194, cysteine 204, cysteine 207, and cysteine 210 each coordinate Zn(2+).

Belongs to the QueC family. Zn(2+) serves as cofactor.

The catalysed reaction is 7-carboxy-7-deazaguanine + NH4(+) + ATP = 7-cyano-7-deazaguanine + ADP + phosphate + H2O + H(+). The protein operates within purine metabolism; 7-cyano-7-deazaguanine biosynthesis. Catalyzes the ATP-dependent conversion of 7-carboxy-7-deazaguanine (CDG) to 7-cyano-7-deazaguanine (preQ(0)). The chain is 7-cyano-7-deazaguanine synthase from Pseudomonas savastanoi pv. phaseolicola (strain 1448A / Race 6) (Pseudomonas syringae pv. phaseolicola (strain 1448A / Race 6)).